Reading from the N-terminus, the 551-residue chain is MRAKKQLLAALQDIVKDMGLAWPEKATIDTPKATGFGDLAANIALVLAKQAGQNPRELATRIADALRNRDADITAIDIAGPGFLNVTYSQDFWRETILRAQEAGSAFGSSDTGAGRKVQVEYVSANPTGPLHIGHGRGAAVGDSLARIMRFAGYDVSTEYYINDAGRQMRLLGLSVWVRAKELAGRPVTLPEDFYRGDYIKDIARELMEKEPGLLDLDDAAGEDRCFAYAMSSILDGIKQDLADFRVEHQVWFSERSLVEGGAVEKTFNRLKEAGLAFEQDGALWFRTTDFGDDKDRVLRKSDGTLTYFSSDIAYHDNKYDRGFDLVVDIWGADHHGYIPRMRAAVAALGRKPEAFDVVLIQLVNLLRGGELVAMSTRAGQFETLADVVKETGADAARFMFLSRKSDSPLDFDLELVKQRTMDNPVYYVQYAHARVCSVLRKAAERGIEMPAQLDGASLAPLSGDDEMELLRLLDRFEETVAGAATALAPHHISHYLMEVAGALHSYYARQPILNATEQDVIVPRLALLRAVGCVLANGLSLLGVSAPESM.

A 'HIGH' region motif is present at residues 125 to 135 (ANPTGPLHIGH).

It belongs to the class-I aminoacyl-tRNA synthetase family. In terms of assembly, monomer.

It is found in the cytoplasm. The enzyme catalyses tRNA(Arg) + L-arginine + ATP = L-arginyl-tRNA(Arg) + AMP + diphosphate. The polypeptide is Arginine--tRNA ligase (Nitratidesulfovibrio vulgaris (strain ATCC 29579 / DSM 644 / CCUG 34227 / NCIMB 8303 / VKM B-1760 / Hildenborough) (Desulfovibrio vulgaris)).